A 968-amino-acid chain; its full sequence is 5'-3' exoribonuclease 2 (968 aa).

2 coiled-coil regions span residues 113–140 (RFRAAKDAELKAKQLEIEVQERELRGEI) and 387–416 (KNKHAAEQRREENNKRRKLAQEQERALKRV). Residues 498–510 (TDSSANSETTTSE) are compositionally biased toward low complexity. 2 disordered regions span residues 498–538 (TDSS…QSDD) and 873–968 (LTNG…RPQR). Positions 521 to 538 (SLKRKLEPEEDKQTQSDD) are enriched in basic and acidic residues. Residues 882 to 893 (QSQNSQYLSYGQ) are compositionally biased toward polar residues. A compositionally biased stretch (low complexity) spans 902-959 (SYNQQGYYNQQGRYNQQGNNYNQQGRYSQQSQYNQYRSNTQRFNNNQNYNQSSNNSRS).

Belongs to the 5'-3' exonuclease family. XRN2/RAT1 subfamily. As to quaternary structure, interacts with RAI1; the interaction is direct, stabilizes RAT1 protein structure and may stimulate its exoribonuclease activity. The interaction also stimulates RAI1 pyrophosphohydrolase activity, probably by recruiting it to mRNA substrates.

The protein localises to the nucleus. Its function is as follows. Possesses 5'-&gt;3' exoribonuclease activity. Required for the processing of nuclear mRNA and rRNA precursors. May promote the termination of transcription by RNA polymerase II. Essential for vegetative cell growth and chromosome segregation. This Candida albicans (strain SC5314 / ATCC MYA-2876) (Yeast) protein is 5'-3' exoribonuclease 2 (RAT1).